We begin with the raw amino-acid sequence, 217 residues long: Adr-2-binding protein 1 (217 aa).

The interval 33 to 65 (ARPEPQHDSLKRRNTTSSIAKKKAKMTRGDEQI) is disordered. A compositionally biased stretch (basic residues) spans 44 to 58 (RRNTTSSIAKKKAKM).

In terms of assembly, interacts with double-stranded RNA-specific adenosine deaminase adr-2. As to expression, expressed in main body hypodermal cells, the hypodermal seam cells, pharynx, intestine and some neurons.

It localises to the nucleus. In terms of biological role, required for the A-I editing activity of the double-stranded RNA-specific adenosine deaminase adr-2 by facilitating adr-2 nuclear localization. In Caenorhabditis elegans, this protein is Adr-2-binding protein 1.